A 380-amino-acid polypeptide reads, in one-letter code: Flap endonuclease 1-A (380 aa).

The tract at residues 1-105 (MGIKGLTKLL…QELAKRYSKR (105 aa)) is N-domain. Asp-34 serves as a coordination point for Mg(2+). Position 71 (Arg-71) interacts with DNA. The Mg(2+) site is built by Asp-87, Glu-159, Glu-161, Asp-180, and Asp-182. Positions 123-254 (AIEKFSKRTV…QTALKLIRQH (132 aa)) are I-domain. Glu-159 is a binding site for DNA. The DNA site is built by Gly-232 and Asp-234. A Mg(2+)-binding site is contributed by Asp-234. The interval 336-344 (SQGRLESFF) is interaction with PCNA. Positions 351 to 380 (SVPLKRKDTSEKPTKAVANKKTKGAGGKKK) are disordered. The span at 355-364 (KRKDTSEKPT) shows a compositional bias: basic and acidic residues. The segment covering 368 to 380 (ANKKTKGAGGKKK) has biased composition (basic residues).

Belongs to the XPG/RAD2 endonuclease family. FEN1 subfamily. In terms of assembly, interacts with PCNA. Three molecules of FEN1 bind to one PCNA trimer with each molecule binding to one PCNA monomer. PCNA stimulates the nuclease activity without altering cleavage specificity. It depends on Mg(2+) as a cofactor. Phosphorylated. Phosphorylation upon DNA damage induces relocalization to the nuclear plasma. As to expression, strongly expressed in proliferating tissues: root and shoot apical meristem, tiller bud, leaf, ligule primordia, marginal meristem of young leaves and panicles. Not expressed in mature leaves when exposed to UV.

It localises to the nucleus. The protein resides in the nucleolus. Its subcellular location is the nucleoplasm. The protein localises to the mitochondrion. Its activity is regulated as follows. Inhibited by NaCl. Functionally, structure-specific nuclease with 5'-flap endonuclease and 5'-3' exonuclease activities involved in DNA replication and repair. During DNA replication, cleaves the 5'-overhanging flap structure that is generated by displacement synthesis when DNA polymerase encounters the 5'-end of a downstream Okazaki fragment. It enters the flap from the 5'-end and then tracks to cleave the flap base, leaving a nick for ligation. Also involved in the long patch base excision repair (LP-BER) pathway, by cleaving within the apurinic/apyrimidinic (AP) site-terminated flap. Acts as a genome stabilization factor that prevents flaps from equilibrating into structures that lead to duplications and deletions. Also possesses 5'-3' exonuclease activity on nicked or gapped double-stranded DNA, and exhibits RNase H activity. Also involved in replication and repair of rDNA and in repairing mitochondrial DNA. May be required for cell proliferation. This chain is Flap endonuclease 1-A, found in Oryza sativa subsp. japonica (Rice).